The chain runs to 342 residues: N-acetyl-gamma-glutamyl-phosphate reductase (342 aa).

The active site involves C146.

The protein belongs to the NAGSA dehydrogenase family. Type 1 subfamily.

The protein localises to the cytoplasm. The enzyme catalyses N-acetyl-L-glutamate 5-semialdehyde + phosphate + NADP(+) = N-acetyl-L-glutamyl 5-phosphate + NADPH + H(+). The protein operates within amino-acid biosynthesis; L-arginine biosynthesis; N(2)-acetyl-L-ornithine from L-glutamate: step 3/4. Catalyzes the NADPH-dependent reduction of N-acetyl-5-glutamyl phosphate to yield N-acetyl-L-glutamate 5-semialdehyde. The chain is N-acetyl-gamma-glutamyl-phosphate reductase from Frankia casuarinae (strain DSM 45818 / CECT 9043 / HFP020203 / CcI3).